A 200-amino-acid chain; its full sequence is 3-isopropylmalate dehydratase small subunit (200 aa).

Belongs to the LeuD family. LeuD type 1 subfamily. In terms of assembly, heterodimer of LeuC and LeuD.

It catalyses the reaction (2R,3S)-3-isopropylmalate = (2S)-2-isopropylmalate. It participates in amino-acid biosynthesis; L-leucine biosynthesis; L-leucine from 3-methyl-2-oxobutanoate: step 2/4. In terms of biological role, catalyzes the isomerization between 2-isopropylmalate and 3-isopropylmalate, via the formation of 2-isopropylmaleate. This is 3-isopropylmalate dehydratase small subunit from Yersinia pseudotuberculosis serotype I (strain IP32953).